A 21-amino-acid chain; its full sequence is DCCHNTQLPFIYKTCPEGCNL.

Belongs to the three-finger toxin family. Short-chain subfamily. Orphan group XV sub-subfamily. Contains 4 disulfide bonds. Expressed by the venom gland.

It is found in the secreted. It localises to the target cell membrane. Its function is as follows. Has hemolytic activity under low-lecithin conditions. Has low cytotoxic activity. Inhibits the expression of VEGF and bFGF in human non-small-cell lung cancer cell line NCI-H1299 in a dose-dependent manner. In Naja atra (Chinese cobra), this protein is Cardiotoxin-like basic polypeptide ah.